Reading from the N-terminus, the 326-residue chain is Small ribosomal subunit biogenesis GTPase RsgA (326 aa).

The region spanning 80 to 241 (LSHQMHIIAS…IIDTPGIKGF (162 aa)) is the CP-type G domain. GTP is bound by residues 129 to 132 (NKID) and 183 to 191 (GHSGVGKST). 4 residues coordinate Zn(2+): C265, C270, H272, and C278.

This sequence belongs to the TRAFAC class YlqF/YawG GTPase family. RsgA subfamily. Monomer. Associates with 30S ribosomal subunit, binds 16S rRNA. Zn(2+) is required as a cofactor.

The protein localises to the cytoplasm. In terms of biological role, one of several proteins that assist in the late maturation steps of the functional core of the 30S ribosomal subunit. Helps release RbfA from mature subunits. May play a role in the assembly of ribosomal proteins into the subunit. Circularly permuted GTPase that catalyzes slow GTP hydrolysis, GTPase activity is stimulated by the 30S ribosomal subunit. This chain is Small ribosomal subunit biogenesis GTPase RsgA, found in Flavobacterium psychrophilum (strain ATCC 49511 / DSM 21280 / CIP 103535 / JIP02/86).